Here is an 83-residue protein sequence, read N- to C-terminus: Small ribosomal subunit protein bS16 (83 aa).

This sequence belongs to the bacterial ribosomal protein bS16 family.

This is Small ribosomal subunit protein bS16 from Azotobacter vinelandii (strain DJ / ATCC BAA-1303).